The chain runs to 309 residues: Porphobilinogen deaminase (309 aa).

At C241 the chain carries S-(dipyrrolylmethanemethyl)cysteine.

This sequence belongs to the HMBS family. Monomer. The cofactor is dipyrromethane.

It carries out the reaction 4 porphobilinogen + H2O = hydroxymethylbilane + 4 NH4(+). Its pathway is porphyrin-containing compound metabolism; protoporphyrin-IX biosynthesis; coproporphyrinogen-III from 5-aminolevulinate: step 2/4. Its function is as follows. Tetrapolymerization of the monopyrrole PBG into the hydroxymethylbilane pre-uroporphyrinogen in several discrete steps. This chain is Porphobilinogen deaminase, found in Desulforudis audaxviator (strain MP104C).